Reading from the N-terminus, the 220-residue chain is Fructose-6-phosphate aldolase (220 aa).

The Schiff-base intermediate with substrate role is filled by K85.

This sequence belongs to the transaldolase family. Type 3A subfamily. In terms of assembly, homodecamer.

The protein resides in the cytoplasm. The enzyme catalyses beta-D-fructose 6-phosphate = dihydroxyacetone + D-glyceraldehyde 3-phosphate. In terms of biological role, catalyzes the reversible formation of fructose 6-phosphate from dihydroxyacetone and D-glyceraldehyde 3-phosphate via an aldolization reaction. This Salmonella choleraesuis (strain SC-B67) protein is Fructose-6-phosphate aldolase.